The primary structure comprises 198 residues: Mediator of RNA polymerase II transcription subunit 20 (198 aa).

The protein belongs to the Mediator complex subunit 20 family. In terms of assembly, component of the Mediator complex.

Its subcellular location is the nucleus. Functionally, component of the Mediator complex, a coactivator involved in the regulated transcription of nearly all RNA polymerase II-dependent genes. Mediator functions as a bridge to convey information from gene-specific regulatory proteins to the basal RNA polymerase II transcription machinery. Mediator is recruited to promoters by direct interactions with regulatory proteins and serves as a scaffold for the assembly of a functional preinitiation complex with RNA polymerase II and the general transcription factors. This is Mediator of RNA polymerase II transcription subunit 20 (mdt-20) from Caenorhabditis briggsae.